The sequence spans 454 residues: NEDD8-activating enzyme E1 catalytic subunit (454 aa).

N-acetylalanine is present on alanine 2. 56 to 80 (GLGCELLKDLALSGFRNLEVIDMDR) contacts ATP. Cysteine 215 serves as the catalytic Glycyl thioester intermediate.

Belongs to the ubiquitin-activating E1 family. UBA3 subfamily. As to quaternary structure, heterodimer of UBA3/ECR1 and AXR1. Interacts with NEDD8 and RCE1. In terms of tissue distribution, expressed in shoot, root and floral meristems, in vascular tissues of cotyledons and mature leaves, and in the stele of the root.

It localises to the nucleus. It carries out the reaction ATP + [NEDD8 protein] + [E1 NEDD8-activating enzyme]-L-cysteine = AMP + diphosphate + [E1 NEDD8-activating enzyme]-S-[NEDD8 protein]-yl-L-cysteine.. The protein operates within protein modification; protein neddylation. Catalytic subunit of the dimeric ECR1-AXR1 E1 enzyme. E1 activates NEDD8/RUB1 by first adenylating its C-terminal glycine residue with ATP, thereafter linking this residue to the side chain of the catalytic cysteine, yielding a NEDD8-ECR1 thioester and free AMP. E1 finally transfers NEDD8 to the catalytic cysteine of RCE1. The sequence is that of NEDD8-activating enzyme E1 catalytic subunit (ECR1) from Arabidopsis thaliana (Mouse-ear cress).